The following is a 635-amino-acid chain: Threonine--tRNA ligase (635 aa).

A TGS domain is found at 1–61; that stretch reads MPIITLPDGN…EKDANIAIIT (61 aa). The catalytic stretch occupies residues 242–533; that stretch reads DHRKIGKQLD…LTEEYAGVYP (292 aa). Positions 333, 384, and 510 each coordinate Zn(2+).

This sequence belongs to the class-II aminoacyl-tRNA synthetase family. As to quaternary structure, homodimer. Zn(2+) is required as a cofactor.

It localises to the cytoplasm. The enzyme catalyses tRNA(Thr) + L-threonine + ATP = L-threonyl-tRNA(Thr) + AMP + diphosphate + H(+). Catalyzes the attachment of threonine to tRNA(Thr) in a two-step reaction: L-threonine is first activated by ATP to form Thr-AMP and then transferred to the acceptor end of tRNA(Thr). Also edits incorrectly charged L-seryl-tRNA(Thr). The sequence is that of Threonine--tRNA ligase from Psychromonas ingrahamii (strain DSM 17664 / CCUG 51855 / 37).